The following is a 93-amino-acid chain: Exodeoxyribonuclease 7 small subunit (93 aa).

Residues 61 to 75 (IDDNGDEKVYEKQTD) are compositionally biased toward basic and acidic residues. A disordered region spans residues 61 to 93 (IDDNGDEKVYEKQTDDPSNNGGGNRGFGSADEQ).

The protein belongs to the XseB family. Heterooligomer composed of large and small subunits.

The protein localises to the cytoplasm. It catalyses the reaction Exonucleolytic cleavage in either 5'- to 3'- or 3'- to 5'-direction to yield nucleoside 5'-phosphates.. Functionally, bidirectionally degrades single-stranded DNA into large acid-insoluble oligonucleotides, which are then degraded further into small acid-soluble oligonucleotides. The chain is Exodeoxyribonuclease 7 small subunit from Limosilactobacillus reuteri (strain DSM 20016) (Lactobacillus reuteri).